The primary structure comprises 387 residues: Eukaryotic translation initiation factor 3 subunit M (387 aa).

Residues leucine 181–histidine 340 enclose the PCI domain.

Belongs to the eIF-3 subunit M family. Component of the eukaryotic translation initiation factor 3 (eIF-3) complex. The eIF-3 complex interacts with pix.

The protein resides in the cytoplasm. Its subcellular location is the golgi apparatus. Component of the eukaryotic translation initiation factor 3 (eIF-3) complex, which is involved in protein synthesis of a specialized repertoire of mRNAs and, together with other initiation factors, stimulates binding of mRNA and methionyl-tRNAi to the 40S ribosome. The eIF-3 complex specifically targets and initiates translation of a subset of mRNAs involved in cell proliferation. The protein is Eukaryotic translation initiation factor 3 subunit M of Drosophila grimshawi (Hawaiian fruit fly).